The primary structure comprises 102 residues: MDIKQTAVAGSLESSDLMITVSPNDEQTITITLDSSVEKQFGNHIRQLIHQTLVNLKVTAAKVEAVDKGALDCTIQARTIAAVHRAAGIDQYDWKEIDSWNV.

O-(phosphoribosyl dephospho-coenzyme A)serine is present on Ser14.

The protein belongs to the CitD family. Oligomer with a subunit composition of (alpha,beta,gamma)6.

The protein resides in the cytoplasm. Its function is as follows. Covalent carrier of the coenzyme of citrate lyase. The chain is Citrate lyase acyl carrier protein from Streptococcus pyogenes serotype M2 (strain MGAS10270).